The following is an 843-amino-acid chain: Glycogen phosphorylase, brain form (843 aa).

Ala2 carries the post-translational modification N-acetylalanine. Ser15 is modified (phosphoserine; by PHK; in form phosphorylase A). Positions 43, 197, and 310 each coordinate AMP. Tyr197 bears the Phosphotyrosine mark. The residue at position 473 (Tyr473) is a Phosphotyrosine. Position 569 (Lys569) interacts with pyridoxal 5'-phosphate. The pyridoxal 5'-phosphate stretch occupies residues 677–678 (TG). Position 681 is an N6-(pyridoxal phosphate)lysine (Lys681).

Belongs to the glycogen phosphorylase family. As to quaternary structure, homodimer. Dimers associate into a tetramer to form the enzymatically active phosphorylase A. Requires pyridoxal 5'-phosphate as cofactor. In terms of processing, phosphorylated. Phosphorylation of Ser-15 converts phosphorylase B (unphosphorylated) to phosphorylase A.

The catalysed reaction is [(1-&gt;4)-alpha-D-glucosyl](n) + phosphate = [(1-&gt;4)-alpha-D-glucosyl](n-1) + alpha-D-glucose 1-phosphate. Activity of phosphorylase is controlled both by allosteric means (through the non-covalent binding of metabolites) and by covalent modification. Thus AMP allosterically activates, whereas ATP, ADP, and glucose-6-phosphate allosterically inhibit, phosphorylase B. Activated upon phosphorylation. Its function is as follows. Glycogen phosphorylase that regulates glycogen mobilization. Phosphorylase is an important allosteric enzyme in carbohydrate metabolism. Enzymes from different sources differ in their regulatory mechanisms and in their natural substrates. However, all known phosphorylases share catalytic and structural properties. This chain is Glycogen phosphorylase, brain form, found in Homo sapiens (Human).